Reading from the N-terminus, the 498-residue chain is Glycerol kinase (498 aa).

Thr12 lines the ADP pocket. Positions 12, 13, and 14 each coordinate ATP. Thr12 is a sn-glycerol 3-phosphate binding site. Arg16 contributes to the ADP binding site. Sn-glycerol 3-phosphate is bound by residues Arg82, Glu83, Tyr134, and Asp241. The glycerol site is built by Arg82, Glu83, Tyr134, Asp241, and Gln242. ADP contacts are provided by Thr263 and Gly310. 4 residues coordinate ATP: Thr263, Gly310, Gln314, and Gly411. ADP contacts are provided by Gly411 and Asn415.

Belongs to the FGGY kinase family.

It carries out the reaction glycerol + ATP = sn-glycerol 3-phosphate + ADP + H(+). It functions in the pathway polyol metabolism; glycerol degradation via glycerol kinase pathway; sn-glycerol 3-phosphate from glycerol: step 1/1. Inhibited by fructose 1,6-bisphosphate (FBP). Its function is as follows. Key enzyme in the regulation of glycerol uptake and metabolism. Catalyzes the phosphorylation of glycerol to yield sn-glycerol 3-phosphate. This Herminiimonas arsenicoxydans protein is Glycerol kinase.